Reading from the N-terminus, the 236-residue chain is Small ribosomal subunit protein uS2c (236 aa).

This sequence belongs to the universal ribosomal protein uS2 family.

The protein localises to the plastid. It is found in the chloroplast. This is Small ribosomal subunit protein uS2c (rps2) from Populus alba (White poplar).